We begin with the raw amino-acid sequence, 167 residues long: Protein-lysine myristoyltransferase RtxC (167 aa).

Residues His-20 and Asp-89 contribute to the active site.

This sequence belongs to the RTX toxin acyltransferase family.

It localises to the cytoplasm. It catalyses the reaction tetradecanoyl-[ACP] + L-lysyl-[protein] = N(6)-tetradecanoyl-L-lysyl-[protein] + holo-[ACP] + H(+). Its function is as follows. Protein-lysine myristoyltransferase that catalyzes myristoylation of the protoxin (RtxA) at two internal lysine residues, thereby converting it to the active toxin. The chain is Protein-lysine myristoyltransferase RtxC from Kingella kingae.